We begin with the raw amino-acid sequence, 261 residues long: MQDLAFHLLAFLFVAAFIAGFIDSIAGGGGMITIPAMLIAGIPPLQTLGTNKLQGLFGSGSATLSYARRGHVNLKEQLPMALMSAAGAVLGALLATIVPGDVLKAILPFLLIAIALYFGLKPNMGDVDQHSRVTPFVFTLTLVPLIGFYDGVFGPGTGSFFMLGFVTLAGFGVLKATAHTKFLNFGSNVGAFGVFLFFGAVLWKVGLLMGLGQFLGAQVGSRYAMAKGAKIIKPLLVIVSIALAIRLLADPTHPLRIWLGH.

8 helical membrane passes run 8–28 (LLAFLFVAAFIAGFIDSIAGG), 29–49 (GGMITIPAMLIAGIPPLQTLG), 78–98 (LPMALMSAAGAVLGALLATIV), 100–120 (GDVLKAILPFLLIAIALYFGL), 133–151 (VTPFVFTLTLVPLIGFYDG), 152–171 (VFGPGTGSFFMLGFVTLAGF), 189–209 (VGAFGVFLFFGAVLWKVGLLM), and 231–251 (IIKPLLVIVSIALAIRLLADP).

The protein belongs to the 4-toluene sulfonate uptake permease (TSUP) (TC 2.A.102) family.

It is found in the cell membrane. This Sinorhizobium sp protein is Probable membrane transporter protein ORF9.